Consider the following 798-residue polypeptide: MNDMNLSPVGMEQLSSSSVSNALPVSGSHLGLAASPSHSAIPAPGLPVAIPNLGPSLSSLPSALSLMLPMGIGDRGVMCGLPERNYTLPPPPYPHLESSYFRTILPGILSYLADRPPPQYIHPNSINVDGNTALSITNNPSALDPYQANGNVGLELGIVSIDSRSVNTHGAQSLHPNDGHEVALDTTITMENVSRVTSPISTDGMAEELTMDGVTGEHSQIPNGSRSHEPLSVDSVSNNLTADTVGHGGVIPIHGNGLELPVVMETDHIANRVNGISDSVLSDSIHTVAMSTNSVSVALSTSHNFASLESVSLQEVGLSLEPVAVSSITQEVAMGTGHVDVSSDSLSFVPSSLQMEDSNSNKENMATLFTIWCTLCDRAYPSDCPDHGPVTFVPDTPIESRARLSLPKQLVLRQSIVGTDVGVWTAETIPVRTCFGPLIGQQSHSMEVAEWTDKAVSHVWKIYHNGVLEFCIITTDENECNWMMFVRKARNREEQNLVAYPHDGKIYFCTSQDIPPENELLFYYSRDYAQQIGVPEHPDVHLCNCGKECSSYSEFKAHLTSHIHNHLPSQGHSSSHGPSHSKERKWKCSMCPQAFISPSKLHVHFMGHMGMKPHKCDFCSKAFSDPSNLRTHLKIHTGQKNYRCTLCDKSFTQKAHLESHMVIHTGEKNLKCDYCDKLFMRRQDLKQHVLIHTQERQIKCPKCDKLFLRTNHLKKHLNSHEGRRDYVCEKCTKAYLTKYHLTRHLKACKEPASSSSAQDDEDEDGDSGEDGLPGSMTTEGCRMSSAVYSADESLSAHK.

Residues 408-525 (KQLVLRQSIV…PENELLFYYS (118 aa)) form the SET domain. 5 consecutive C2H2-type zinc fingers follow at residues 586-608 (WKCSMCPQAFISPSKLHVHFMGH), 614-636 (HKCDFCSKAFSDPSNLRTHLKIH), 642-664 (YRCTLCDKSFTQKAHLESHMVIH), 670-692 (LKCDYCDKLFMRRQDLKQHVLIH), and 698-720 (IKCPKCDKLFLRTNHLKKHLNSH). The C2H2-type 6; degenerate zinc-finger motif lies at 726-747 (YVCEKCTKAYLTKYHLTRHLKA). The tract at residues 750-798 (EPASSSSAQDDEDEDGDSGEDGLPGSMTTEGCRMSSAVYSADESLSAHK) is disordered. Residues 758-769 (QDDEDEDGDSGE) show a composition bias toward acidic residues.

This sequence belongs to the class V-like SAM-binding methyltransferase superfamily.

It localises to the nucleus. Its function is as follows. May function as a transcription factor involved in cell differentiation. The polypeptide is PR domain zinc finger protein 4 (Prdm4) (Rattus norvegicus (Rat)).